Here is a 286-residue protein sequence, read N- to C-terminus: UPF0725 protein At2g20620 (286 aa).

Residues 1–49 are disordered; sequence MVLETPVCSPIDKESSSDDVQLNKPPKKKRKLDVVYPPRDNTSSSSDVK.

Belongs to the UPF0725 (EMB2204) family.

The protein is UPF0725 protein At2g20620 of Arabidopsis thaliana (Mouse-ear cress).